A 149-amino-acid chain; its full sequence is Calmodulin (149 aa).

Ala-2 is modified (N-acetylalanine). EF-hand domains lie at 8–43 (EQIA…LGQN), 44–79 (PTEA…KMKD), 81–116 (DSEE…LGEK), and 117–149 (LTDE…MMAK). Positions 21, 23, 25, 27, 32, 57, 59, 61, 63, 68, 94, 96, 98, and 105 each coordinate Ca(2+). Position 116 is an N6,N6,N6-trimethyllysine (Lys-116). The Ca(2+) site is built by Asp-130, Asp-132, Asp-134, Gln-136, and Glu-141.

It belongs to the calmodulin family.

In terms of biological role, calmodulin mediates the control of a large number of enzymes, ion channels and other proteins by Ca(2+). Among the enzymes to be stimulated by the calmodulin-Ca(2+) complex are a number of protein kinases and phosphatases. This is Calmodulin from Macrocystis pyrifera (Giant kelp).